The primary structure comprises 256 residues: Large ribosomal subunit protein uL2 (256 aa).

Residues 208–230 (EHPHGGGNHQHIGKASTVKRGTS) form a disordered region.

Belongs to the universal ribosomal protein uL2 family. In terms of tissue distribution, in larvae tissues examined: gut, brain imaginal disk, salivary glands, fat body, muscles, epidermis and trachaea.

It localises to the cytoplasm. The protein is Large ribosomal subunit protein uL2 (RpL8) of Drosophila melanogaster (Fruit fly).